The sequence spans 355 residues: UDP-N-acetylglucosamine--N-acetylmuramyl-(pentapeptide) pyrophosphoryl-undecaprenol N-acetylglucosamine transferase (355 aa).

UDP-N-acetyl-alpha-D-glucosamine-binding positions include 15 to 17 (TGG), asparagine 127, arginine 163, serine 191, isoleucine 244, 263 to 268 (ALTVSE), and glutamine 288.

This sequence belongs to the glycosyltransferase 28 family. MurG subfamily.

Its subcellular location is the cell inner membrane. It carries out the reaction di-trans,octa-cis-undecaprenyl diphospho-N-acetyl-alpha-D-muramoyl-L-alanyl-D-glutamyl-meso-2,6-diaminopimeloyl-D-alanyl-D-alanine + UDP-N-acetyl-alpha-D-glucosamine = di-trans,octa-cis-undecaprenyl diphospho-[N-acetyl-alpha-D-glucosaminyl-(1-&gt;4)]-N-acetyl-alpha-D-muramoyl-L-alanyl-D-glutamyl-meso-2,6-diaminopimeloyl-D-alanyl-D-alanine + UDP + H(+). It functions in the pathway cell wall biogenesis; peptidoglycan biosynthesis. Its function is as follows. Cell wall formation. Catalyzes the transfer of a GlcNAc subunit on undecaprenyl-pyrophosphoryl-MurNAc-pentapeptide (lipid intermediate I) to form undecaprenyl-pyrophosphoryl-MurNAc-(pentapeptide)GlcNAc (lipid intermediate II). This chain is UDP-N-acetylglucosamine--N-acetylmuramyl-(pentapeptide) pyrophosphoryl-undecaprenol N-acetylglucosamine transferase, found in Citrobacter koseri (strain ATCC BAA-895 / CDC 4225-83 / SGSC4696).